The sequence spans 102 residues: Small ribosomal subunit protein uS10 (102 aa).

It belongs to the universal ribosomal protein uS10 family. In terms of assembly, part of the 30S ribosomal subunit.

Functionally, involved in the binding of tRNA to the ribosomes. The chain is Small ribosomal subunit protein uS10 from Oenococcus oeni (strain ATCC BAA-331 / PSU-1).